The sequence spans 316 residues: N-acetyl-gamma-glutamyl-phosphate reductase (316 aa).

Cys-136 is an active-site residue.

It belongs to the NAGSA dehydrogenase family. Type 1 subfamily.

The protein localises to the cytoplasm. The catalysed reaction is N-acetyl-L-glutamate 5-semialdehyde + phosphate + NADP(+) = N-acetyl-L-glutamyl 5-phosphate + NADPH + H(+). It functions in the pathway amino-acid biosynthesis; L-arginine biosynthesis; N(2)-acetyl-L-ornithine from L-glutamate: step 3/4. Its function is as follows. Catalyzes the NADPH-dependent reduction of N-acetyl-5-glutamyl phosphate to yield N-acetyl-L-glutamate 5-semialdehyde. This Xanthomonas campestris pv. campestris (strain 8004) protein is N-acetyl-gamma-glutamyl-phosphate reductase.